We begin with the raw amino-acid sequence, 283 residues long: Pantothenate synthetase (283 aa).

Residue Met-30–His-37 participates in ATP binding. Catalysis depends on His-37, which acts as the Proton donor. A (R)-pantoate-binding site is contributed by Gln-61. Beta-alanine is bound at residue Gln-61. Residue Gly-147–Asp-150 coordinates ATP. Position 153 (Gln-153) interacts with (R)-pantoate. ATP contacts are provided by residues Val-176 and Leu-184–Arg-187.

The protein belongs to the pantothenate synthetase family. Homodimer.

The protein resides in the cytoplasm. It carries out the reaction (R)-pantoate + beta-alanine + ATP = (R)-pantothenate + AMP + diphosphate + H(+). It participates in cofactor biosynthesis; (R)-pantothenate biosynthesis; (R)-pantothenate from (R)-pantoate and beta-alanine: step 1/1. Its function is as follows. Catalyzes the condensation of pantoate with beta-alanine in an ATP-dependent reaction via a pantoyl-adenylate intermediate. In Moorella thermoacetica (strain ATCC 39073 / JCM 9320), this protein is Pantothenate synthetase.